The sequence spans 2200 residues: Non-reducing polyketide synthase tpeB (2200 aa).

The 240-residue stretch at 16–255 (FFGDQTVDTL…MDLPLGTPAH (240 aa)) folds into the Starter acyltransferase (SAT) domain. A Ketosynthase family 3 (KS3) domain is found at 382–815 (SNMIAIVGQS…GGNNCVLLEE (434 aa)). Active-site for beta-ketoacyl synthase activity residues include C554, H690, and H729. In terms of domain architecture, Malonyl-CoA:ACP transacylase (MAT) spans 914–1202 (VFAFTGQGSQ…VLNSFIKATL (289 aa)). Positions 1296–1621 (TASLQRVREE…TKRILTTILG (326 aa)) are product template (PT) domain. The N-terminal hotdog fold stretch occupies residues 1300-1433 (QRVREERIQG…CKIRFESKAD (134 aa)). In terms of domain architecture, PKS/mFAS DH spans 1300 to 1617 (QRVREERIQG…FQRLTKRILT (318 aa)). H1332 acts as the Proton acceptor; for dehydratase activity in catalysis. Positions 1462 to 1617 (NGHKLPKPVV…FQRLTKRILT (156 aa)) are C-terminal hotdog fold. Catalysis depends on D1522, which acts as the Proton donor; for dehydratase activity. Residues 1625–1652 (DHHNSNEVRNGNATTTHTNPPAHATTQS) are disordered. Positions 1636–1650 (NATTTHTNPPAHATT) are enriched in low complexity. 2 Carrier domains span residues 1671–1748 (TVGE…AELP) and 1791–1865 (ANYA…GPNT). 2 positions are modified to O-(pantetheine 4'-phosphoryl)serine: S1708 and S1825. The segment at 1931-2173 (MFFLPDGTGY…TVPCDHLSIM (243 aa)) is thioesterase (TE) domain.

The cofactor is pantetheine 4'-phosphate.

The protein operates within secondary metabolite biosynthesis. Non-reducing polyketide synthase; part of the gene cluster that mediates the biosynthesis of polyesters containing 2,4-dihydroxy-6-(2-hydroxypropyl)benzoate and 3-hydroxybutyrate moieties, such as talapolyester G, 15G256beta and 15G256beta-2; as well as to oxidized derivatives such as 15G256alpha. The biosynthesis of the polyesters probably starts with the formation of the diketide 3-hydroxybutyryl-S-ACP catalyzed by the partially reducing polyketide synthase tpeA. The acceptance of 3-hydroxybutyryl by the non-reducing polyketide synthase tpeB would initiate further elongation and cyclization, catalyzed by KS and PT, respectively, to form 2,4-dihydroxy-6-(2-hydroxyn-propyl)benzoyl-S-ACP intermediate. The TE domain could catalyze lactonization at this step to yield 6-hydroxymellein as a derailment product. The polyesterification process maybe occurs when additional molecules of 3-hydroxybutyryl are transferred to tpeB. Following the first esterification step, an intramolecular cyclization catalyzed by the TE domain of tpeB would give talarodioxadione 1, whereas the ethyl esterification of talapolyester G perhaps happens spontaneously. Further oxidation by the cytochrome P450 monooxygenase tpeC then leads to the formation of oxidized derivatives. This is Non-reducing polyketide synthase tpeB from Talaromyces stipitatus (strain ATCC 10500 / CBS 375.48 / QM 6759 / NRRL 1006) (Penicillium stipitatum).